The chain runs to 1325 residues: Bile salt export pump (1325 aa).

The Cytoplasmic portion of the chain corresponds to 1–62 (MSDAVILRSV…FSSTTDIWLM (62 aa)). Residues 62–385 (MFVGSLCAFL…ASSCLEAFAT (324 aa)) enclose the ABC transmembrane type-1 1 domain. Residues 63 to 83 (FVGSLCAFLHGLSHPGVLLIF) form a helical membrane-spanning segment. The Extracellular portion of the chain corresponds to 84-147 (GTMTDVFIAY…MIKFASYYAG (64 aa)). Asn-109, Asn-116, Asn-122, and Asn-125 each carry an N-linked (GlcNAc...) asparagine glycan. A helical membrane pass occupies residues 148–168 (IALLVLITGYIQICFWVIAAA). At 169–240 (RQIQKMRKIS…FLLGFYQGWK (72 aa)) the chain is on the cytoplasmic side. The chain crosses the membrane as a helical span at residues 241 to 261 (LTLVIISVSPLIGIGAAIIGL). Topologically, residues 262 to 319 (SVSKFTDYELKAYAKAGSVADEVISSMRTVAAFGGEKKEVERYEKNLVFAQRWGIRKG) are extracellular. A helical membrane pass occupies residues 320-340 (IVMGFFTGFMWCLIFLCYALA). Residues 341 to 353 (FWYGSKLVLEDGE) lie on the Cytoplasmic side of the membrane. The chain crosses the membrane as a helical span at residues 354–374 (YTAGTLVQIFLSILLGALNLG). N-linked (GlcNAc...) asparagine glycosylation is found at Asn-375, Asn-424, and Asn-440. Over 375–759 (NASSCLEAFA…KFNAPEWPYM (385 aa)) the chain is Extracellular. The ABC transporter 1 domain occupies 420-656 (IEFHNVTFHY…KGVYFTLVTL (237 aa)). 455-462 (GSSGSGKS) provides a ligand contact to ATP. The N-linked (GlcNAc...) asparagine glycan is linked to Asn-591. An ABC transmembrane type-1 2 domain is found at 759 to 1047 (MLFGAVGAAV…ASSYTPSYAK (289 aa)). A helical membrane pass occupies residues 760–780 (LFGAVGAAVNGSVTPLYAFLF). Residues 781-798 (SQILGTFSLPDKEEQRSQ) are Cytoplasmic-facing. Residues 799–819 (INGVCLLFVAVGCVSLCTQFL) traverse the membrane as a helical segment. At 820–894 (QGYAFAKSGE…NSFTNVTVAM (75 aa)) the chain is on the extracellular side. Asn-889 carries an N-linked (GlcNAc...) asparagine glycan. The chain crosses the membrane as a helical span at residues 895–915 (IIAFFFSWKLSLVIMCFFPFL). Residues 916-983 (ALSGALQTRM…PFKTAFRKAN (68 aa)) are Cytoplasmic-facing. A helical transmembrane segment spans residues 984 to 1004 (VYGFCFGFSQCIVFVANSASY). Over 1005–1014 (RYGGYLIPNE) the chain is Extracellular. The helical transmembrane segment at 1015–1035 (GLHFSYVFRVISSVVLSATAL) threads the bilayer. The Cytoplasmic segment spans residues 1036 to 1325 (GRASSYTPSY…KLVTTGAPIS (290 aa)). Residues 1082–1320 (VDFVDCKFTY…KGAYYKLVTT (239 aa)) form the ABC transporter 2 domain. Residue 1117-1124 (GSSGCGKS) participates in ATP binding.

It belongs to the ABC transporter superfamily. ABCB family. Multidrug resistance exporter (TC 3.A.1.201) subfamily. As to quaternary structure, interacts with HAX1. Interacts with the adapter protein complex 2 (AP-2) throught AP2A2 or AP2A1; this interaction regulates cell membrane expression of ABCB11 through its internalization in a clathrin-dependent manner and its subsequent degradation. N-glycosylated. In terms of processing, ubiquitinated; short-chain ubiquitination regulates cell-Surface expression of ABCB11. As to expression, liver.

It localises to the apical cell membrane. The protein resides in the recycling endosome membrane. Its subcellular location is the endosome. It is found in the cell membrane. It catalyses the reaction cholate(in) + ATP + H2O = cholate(out) + ADP + phosphate + H(+). The enzyme catalyses taurocholate(in) + ATP + H2O = taurocholate(out) + ADP + phosphate + H(+). It carries out the reaction glycocholate(in) + ATP + H2O = glycocholate(out) + ADP + phosphate + H(+). The catalysed reaction is glycochenodeoxycholate(in) + ATP + H2O = glycochenodeoxycholate(out) + ADP + phosphate + H(+). It catalyses the reaction taurochenodeoxycholate(in) + ATP + H2O = taurochenodeoxycholate(out) + ADP + phosphate + H(+). The enzyme catalyses glycoursodeoxycholate(in) + ATP + H2O = glycoursodeoxycholate(out) + ADP + phosphate + H(+). It carries out the reaction tauroursodeoxycholate(in) + ATP + H2O = tauroursodeoxycholate(out) + ADP + phosphate + H(+). The catalysed reaction is taurodeoxycholate(in) + ATP + H2O = taurodeoxycholate(out) + ADP + phosphate + H(+). It catalyses the reaction taurolithocholate 3-sulfate(in) + ATP + H2O = taurolithocholate 3-sulfate(out) + ADP + phosphate + H(+). The enzyme catalyses pravastatin(in) + ATP + H2O = pravastatin(out) + ADP + phosphate + H(+). With respect to regulation, the uptake of taurocholate is inhibited by taurolithocholate sulfate with an IC(50) of 9 uM. Pravastatin competitively inhibits the transport of taurocholic acid. Cyclosporin A, glibenclamide, rifampicin and troglitazonestrongly competitively inhibit the transport activity of taurocholate. The canalicular transport activity of taurocholate is strongly dependent on canalicular membrane cholesterol content. The uptake of taurocholate is increased by short- and medium-chain fatty acids. Cholesterol increases transport capacity of taurocholate without affecting the affinity for the substrate. Catalyzes the transport of the major hydrophobic bile salts, such as taurine and glycine-conjugated cholic acid across the canalicular membrane of hepatocytes in an ATP-dependent manner, therefore participates in hepatic bile acid homeostasis and consequently to lipid homeostasis through regulation of biliary lipid secretion in a bile salts dependent manner. Transports taurine-conjugated bile salts more rapidly than glycine-conjugated bile salts. Also transports non-bile acid compounds, such as pravastatin and fexofenadine in an ATP-dependent manner and may be involved in their biliary excretion. The chain is Bile salt export pump from Canis lupus familiaris (Dog).